A 377-amino-acid chain; its full sequence is tRNA-specific 2-thiouridylase MnmA (377 aa).

ATP-binding positions include 8–15 (GMSGGVDS) and methionine 34. Residues 94–96 (NPD) are interaction with target base in tRNA. Cysteine 99 serves as the catalytic Nucleophile. A disulfide bond links cysteine 99 and cysteine 201. Glycine 123 is a binding site for ATP. Residues 151–153 (KDQ) are interaction with tRNA. Catalysis depends on cysteine 201, which acts as the Cysteine persulfide intermediate. Residues 315 to 316 (RY) form an interaction with tRNA region.

It belongs to the MnmA/TRMU family.

It is found in the cytoplasm. The enzyme catalyses S-sulfanyl-L-cysteinyl-[protein] + uridine(34) in tRNA + AH2 + ATP = 2-thiouridine(34) in tRNA + L-cysteinyl-[protein] + A + AMP + diphosphate + H(+). In terms of biological role, catalyzes the 2-thiolation of uridine at the wobble position (U34) of tRNA, leading to the formation of s(2)U34. The chain is tRNA-specific 2-thiouridylase MnmA from Acinetobacter baumannii (strain ACICU).